The primary structure comprises 303 residues: Taste receptor type 2 member 2 (303 aa).

Residues 1-10 (MALSFSAILH) lie on the Extracellular side of the membrane. The chain crosses the membrane as a helical span at residues 11 to 31 (IIMMSAEFFTGITVNGFLIIV). At 32-56 (NCNELIKHRKLMPIQILLMCIGMSR) the chain is on the cytoplasmic side. A helical membrane pass occupies residues 57-77 (FGLQMVLMVQSFFSVFFPLLY). Residues 78-79 (VK) are Extracellular-facing. A helical transmembrane segment spans residues 80–100 (IIYGAAMMFLWMFFSSISLWF). Residues 101-102 (AT) lie on the Cytoplasmic side of the membrane. A helical transmembrane segment spans residues 103-123 (CLSVFYCLKISGFTQSCFLWL). The Extracellular portion of the chain corresponds to 124–129 (KFRIPK). A helical membrane pass occupies residues 130 to 150 (LIPWLLLGSVLASVSIASVCI). Over 151–185 (EVDYAKNVEEDALRNTTLKKSKTKIKKISEVLLVN) the chain is Cytoplasmic. Residues 186 to 206 (LALIFPLAIFVMCTSMLLISL) form a helical membrane-spanning segment. The Extracellular portion of the chain corresponds to 207 to 234 (YKHTHRMQHGSHGFRNANTEAHINALKT). A helical transmembrane segment spans residues 235 to 255 (VITFFCFFISYFAAFMTNMTF). At 256–277 (SLPYRSHQFFMLKDIMAAYPSG) the chain is on the cytoplasmic side.

Belongs to the G-protein coupled receptor T2R family.

It is found in the cell membrane. Bitter taste receptor that detects natural and synthetic bitter compounds. The chain is Taste receptor type 2 member 2 from Homo sapiens (Human).